The chain runs to 514 residues: FAD-dependent monooxygenase AacuC (514 aa).

The disordered stretch occupies residues 1 to 29; the sequence is MVSNEYLTHGDKDEFDPAKWSSTPGELPP. The span at 8–17 shows a compositional bias: basic and acidic residues; it reads THGDKDEFDP. 2 residues coordinate FAD: valine 79 and arginine 146. Arginine 227 is an active-site residue. Aspartate 358 and glycine 371 together coordinate FAD.

Belongs to the paxM FAD-dependent monooxygenase family. FAD is required as a cofactor.

It participates in secondary metabolite biosynthesis. Functionally, FAD-dependent monooxygenase; part of the gene cluster that mediates the biosynthesis of the tetrahydroxanthone dimer secalonic acid D. The pathway begins with the synthesis of atrochrysone thioester by the polyketide synthase AacuL. The atrochrysone carboxyl ACP thioesterase AacuM then breaks the thioester bond and releases the atrochrysone carboxylic acid from AacuL. Atrochrysone carboxylic acid is decarboxylated by the decarboxylase AacuI, and oxidized by the anthrone oxygenase AacuG to yield emodin. Emodin is then reduced to emodin hydroquinone by a yet unidentified oxidoreductase. A-ring reduction by the short chain dehydrogenase AacuN, dehydration by the scytalone dehydratase-like protein AacuK and probable spontaneous re-oxidation, results in overall deoxygenation to chrysophanol. Baeyer-Villiger oxidation by the Baeyer-Villiger monooxygenase (BVMO) AacuH then yields monodictyphenone. Monodictyphenone is transformed into compounds with the tetrahydroxanthone skeleton via methylesterification by the methyltransferase AacuQ, followed by the action of the flavin-dependent monooxygenase AacuC, the isomerase AacuP, and the short chain dehydrogenase/reductase AacuF or AacuD. AacuF and AacuD should accept the same compound as a substrate but perform the ketoreduction with a different stereoselectivity, thus yielding blennolides B and A, respectively. In the final step of the biosynthesis, the cytochrome P450 monooxygenase AacuE accepts blennolide B and/or blennolide A to conduct the dimerization reaction to furnish the tetrahydroxanthone dimers, secalonic acids D, B, and F. The sequence is that of FAD-dependent monooxygenase AacuC from Aspergillus aculeatus (strain ATCC 16872 / CBS 172.66 / WB 5094).